The primary structure comprises 433 residues: Probable exopolygalacturonase X (433 aa).

A signal peptide spans methionine 1 to glycine 21. A disordered region spans residues valine 30–asparagine 54. Positions threonine 43–asparagine 54 are enriched in polar residues. Asparagine 46, asparagine 127, and asparagine 197 each carry an N-linked (GlcNAc...) asparagine glycan. The PbH1 1 repeat unit spans residues serine 229–proline 250. Aspartate 243 functions as the Proton donor in the catalytic mechanism. Cysteine 245 and cysteine 262 are joined by a disulfide. N-linked (GlcNAc...) asparagine glycans are attached at residues asparagine 251 and asparagine 263. The PbH1 2 repeat unit spans residues serine 252–serine 272. Histidine 266 is an active-site residue. 5 N-linked (GlcNAc...) asparagine glycosylation sites follow: asparagine 290, asparagine 295, asparagine 327, asparagine 352, and asparagine 362. One copy of the PbH1 3 repeat lies at valine 325 to glutamine 346. The PbH1 4 repeat unit spans residues proline 360 to asparagine 403. Cysteine 390 and cysteine 396 are joined by a disulfide.

The protein belongs to the glycosyl hydrolase 28 family.

It is found in the secreted. It carries out the reaction [(1-&gt;4)-alpha-D-galacturonosyl](n) + H2O = alpha-D-galacturonate + [(1-&gt;4)-alpha-D-galacturonosyl](n-1). In terms of biological role, specific in hydrolyzing the terminal glycosidic bond of polygalacturonic acid and oligogalacturonates. The sequence is that of Probable exopolygalacturonase X (pgaX) from Aspergillus flavus (strain ATCC 200026 / FGSC A1120 / IAM 13836 / NRRL 3357 / JCM 12722 / SRRC 167).